Here is a 367-residue protein sequence, read N- to C-terminus: UDP-N-acetylglucosamine--N-acetylmuramyl-(pentapeptide) pyrophosphoryl-undecaprenol N-acetylglucosamine transferase (367 aa).

UDP-N-acetyl-alpha-D-glucosamine contacts are provided by residues Thr22–Gly24, Asn134, Arg170, Ser198, Ile253, and Gln298.

This sequence belongs to the glycosyltransferase 28 family. MurG subfamily.

The protein localises to the cell inner membrane. The enzyme catalyses di-trans,octa-cis-undecaprenyl diphospho-N-acetyl-alpha-D-muramoyl-L-alanyl-D-glutamyl-meso-2,6-diaminopimeloyl-D-alanyl-D-alanine + UDP-N-acetyl-alpha-D-glucosamine = di-trans,octa-cis-undecaprenyl diphospho-[N-acetyl-alpha-D-glucosaminyl-(1-&gt;4)]-N-acetyl-alpha-D-muramoyl-L-alanyl-D-glutamyl-meso-2,6-diaminopimeloyl-D-alanyl-D-alanine + UDP + H(+). Its pathway is cell wall biogenesis; peptidoglycan biosynthesis. Functionally, cell wall formation. Catalyzes the transfer of a GlcNAc subunit on undecaprenyl-pyrophosphoryl-MurNAc-pentapeptide (lipid intermediate I) to form undecaprenyl-pyrophosphoryl-MurNAc-(pentapeptide)GlcNAc (lipid intermediate II). The protein is UDP-N-acetylglucosamine--N-acetylmuramyl-(pentapeptide) pyrophosphoryl-undecaprenol N-acetylglucosamine transferase of Xylella fastidiosa (strain M23).